The sequence spans 438 residues: GTPase Obg (438 aa).

Positions 2-160 (SMFLDTAKIS…RELELELKIL (159 aa)) constitute an Obg domain. The disordered stretch occupies residues 128–147 (NIRFATPRNPAPEIAENGEP). Positions 161–338 (ADVGLVGFPS…LLDATANLLA (178 aa)) constitute an OBG-type G domain. GTP contacts are provided by residues 167 to 174 (GFPSVGKS), 192 to 196 (FTTIV), 214 to 217 (DLPG), 284 to 287 (NKMD), and 319 to 321 (STL). Residues serine 174 and threonine 194 each contribute to the Mg(2+) site. Residues 360–438 (GFSEEEKAFE…IGNFEFEFVD (79 aa)) enclose the OCT domain.

It belongs to the TRAFAC class OBG-HflX-like GTPase superfamily. OBG GTPase family. As to quaternary structure, monomer. Requires Mg(2+) as cofactor.

The protein localises to the cytoplasm. Functionally, an essential GTPase which binds GTP, GDP and possibly (p)ppGpp with moderate affinity, with high nucleotide exchange rates and a fairly low GTP hydrolysis rate. Plays a role in control of the cell cycle, stress response, ribosome biogenesis and in those bacteria that undergo differentiation, in morphogenesis control. The protein is GTPase Obg of Streptococcus uberis (strain ATCC BAA-854 / 0140J).